The sequence spans 289 residues: MASGKEIRTKIKSVQNTRKITKAMEMVAASKMRKAQDRMRAARPYADKIRRLAANLSQANVTDYKHPFLVRKDQVKRVGLILVTTDKGLCGGLNTNVQRVAVNAMKEWEAAGATEIRACCIGNKGFGFMQRIGAKVVSHVTQLGDTPHLEKLIGPVKVMLDAFQNGELDAVYVAYTRFINTMKQEPQLEQLLPLTGEKLGTPDNSWDYLYEPDPQVVIDELLVRYVEALVYQAVAENMASEQSARMVAMKAASDNAKNVIGELQLVYNKTRQAAITKELSEIVGGAAAV.

The protein belongs to the ATPase gamma chain family. As to quaternary structure, F-type ATPases have 2 components, CF(1) - the catalytic core - and CF(0) - the membrane proton channel. CF(1) has five subunits: alpha(3), beta(3), gamma(1), delta(1), epsilon(1). CF(0) has three main subunits: a, b and c.

The protein resides in the cell inner membrane. Functionally, produces ATP from ADP in the presence of a proton gradient across the membrane. The gamma chain is believed to be important in regulating ATPase activity and the flow of protons through the CF(0) complex. The sequence is that of ATP synthase gamma chain from Azoarcus sp. (strain BH72).